Consider the following 239-residue polypeptide: MKNKRSQNSPYITPNSSYTTLEKALGYSFKDKRLLEQALTHKSCKLALNNERLEFLGDAVLGLVIGELLYHKFYQYDEGKLSKLRASIVSAHGFTKLAKAIALQDYLRVSSSEEISNGREKPSILSSAFEALMAGVYLEAGLAKVQKIMQNLLNRAYKRLDLEHLFMDYKTALQELTQAQFCVIPTYQLLKEKGPDHHKEFEMALYIQDKMYATAKGKSKKEAEQQCAYQALQKLKEAK.

One can recognise an RNase III domain in the interval 18–141 (YTTLEKALGY…LMAGVYLEAG (124 aa)). Residue E54 participates in Mg(2+) binding. The active site involves D58. Mg(2+) contacts are provided by S127 and E130. E130 is an active-site residue. Residues 168-237 (DYKTALQELT…AYQALQKLKE (70 aa)) enclose the DRBM domain.

It belongs to the ribonuclease III family. In terms of assembly, homodimer. Mg(2+) serves as cofactor.

It localises to the cytoplasm. It carries out the reaction Endonucleolytic cleavage to 5'-phosphomonoester.. Functionally, digests double-stranded RNA. Involved in the processing of primary rRNA transcript to yield the immediate precursors to the large and small rRNAs (23S and 16S). Processes some mRNAs, and tRNAs when they are encoded in the rRNA operon. Processes pre-crRNA and tracrRNA of type II CRISPR loci if present in the organism. This chain is Ribonuclease 3, found in Helicobacter pylori (strain ATCC 700392 / 26695) (Campylobacter pylori).